The following is a 451-amino-acid chain: Ribonuclease J (451 aa).

Residues histidine 84, histidine 86, aspartate 88, histidine 89, histidine 155, and aspartate 177 each contribute to the Zn(2+) site. 384-388 contacts substrate; the sequence is HVSGH. Histidine 410 is a Zn(2+) binding site.

It belongs to the metallo-beta-lactamase superfamily. RNA-metabolizing metallo-beta-lactamase-like family. Archaeal RNase J subfamily. Homodimer. It depends on Zn(2+) as a cofactor.

The protein resides in the cytoplasm. With respect to regulation, inhibited by 1,10-phenanthroline. In terms of biological role, a highly processive 5'-3' exoribonuclease; no evidence has been seen for endonuclease activity. Prefers 5'-phosphate or 5'-hydroxyl ends; 5'-triphosphate substrates are very poorly degraded, does not degrade circular RNA. Does not degrade pre-tRNA(Trp) suggesting it is inhibited by strong secondary structures. Also degrades ssNDA but not dsDNA. The protein is Ribonuclease J of Pyrococcus abyssi (strain GE5 / Orsay).